We begin with the raw amino-acid sequence, 183 residues long: Holliday junction branch migration complex subunit RuvA (183 aa).

Residues 1–63 (MIVGLIGVVE…EDANLLYGFL (63 aa)) are domain I. Residues 64–139 (EESEKILFER…FFIQDENRPA (76 aa)) form a domain II region. Residue A139 is a region of interest, flexible linker. The domain III stretch occupies residues 139 to 183 (ARNEVFLALESLGFKSAEINKVLKTLKPNLSIEAAIKEALQQLRS).

Belongs to the RuvA family. In terms of assembly, homotetramer. Forms an RuvA(8)-RuvB(12)-Holliday junction (HJ) complex. HJ DNA is sandwiched between 2 RuvA tetramers; dsDNA enters through RuvA and exits via RuvB. An RuvB hexamer assembles on each DNA strand where it exits the tetramer. Each RuvB hexamer is contacted by two RuvA subunits (via domain III) on 2 adjacent RuvB subunits; this complex drives branch migration. In the full resolvosome a probable DNA-RuvA(4)-RuvB(12)-RuvC(2) complex forms which resolves the HJ.

It localises to the cytoplasm. In terms of biological role, the RuvA-RuvB-RuvC complex processes Holliday junction (HJ) DNA during genetic recombination and DNA repair, while the RuvA-RuvB complex plays an important role in the rescue of blocked DNA replication forks via replication fork reversal (RFR). RuvA specifically binds to HJ cruciform DNA, conferring on it an open structure. The RuvB hexamer acts as an ATP-dependent pump, pulling dsDNA into and through the RuvAB complex. HJ branch migration allows RuvC to scan DNA until it finds its consensus sequence, where it cleaves and resolves the cruciform DNA. The protein is Holliday junction branch migration complex subunit RuvA of Helicobacter pylori (strain HPAG1).